A 109-amino-acid polypeptide reads, in one-letter code: Large ribosomal subunit protein uL24 (109 aa).

Belongs to the universal ribosomal protein uL24 family. Part of the 50S ribosomal subunit.

Functionally, one of two assembly initiator proteins, it binds directly to the 5'-end of the 23S rRNA, where it nucleates assembly of the 50S subunit. One of the proteins that surrounds the polypeptide exit tunnel on the outside of the subunit. This chain is Large ribosomal subunit protein uL24, found in Syntrophobacter fumaroxidans (strain DSM 10017 / MPOB).